The sequence spans 205 residues: Large ribosomal subunit protein bL25A (205 aa).

It belongs to the bacterial ribosomal protein bL25 family. CTC subfamily. As to quaternary structure, part of the 50S ribosomal subunit; part of the 5S rRNA/L5/L18/L25 subcomplex. Contacts the 5S rRNA. Binds to the 5S rRNA independently of L5 and L18.

In terms of biological role, this is one of the proteins that binds to the 5S RNA in the ribosome where it forms part of the central protuberance. The sequence is that of Large ribosomal subunit protein bL25A from Symbiobacterium thermophilum (strain DSM 24528 / JCM 14929 / IAM 14863 / T).